The chain runs to 259 residues: tRNA pseudouridine synthase A (259 aa).

The active-site Nucleophile is aspartate 52. Tyrosine 111 contributes to the substrate binding site.

The protein belongs to the tRNA pseudouridine synthase TruA family. As to quaternary structure, homodimer.

The enzyme catalyses uridine(38/39/40) in tRNA = pseudouridine(38/39/40) in tRNA. In terms of biological role, formation of pseudouridine at positions 38, 39 and 40 in the anticodon stem and loop of transfer RNAs. This Ruegeria sp. (strain TM1040) (Silicibacter sp.) protein is tRNA pseudouridine synthase A.